Reading from the N-terminus, the 323-residue chain is Aspartate carbamoyltransferase catalytic subunit (323 aa).

Residues Arg-71 and Thr-72 each contribute to the carbamoyl phosphate site. Lys-99 contacts L-aspartate. 3 residues coordinate carbamoyl phosphate: Arg-121, His-151, and Gln-154. L-aspartate is bound by residues Arg-184 and Arg-239. Positions 280 and 281 each coordinate carbamoyl phosphate.

Belongs to the aspartate/ornithine carbamoyltransferase superfamily. ATCase family. In terms of assembly, heterododecamer (2C3:3R2) of six catalytic PyrB chains organized as two trimers (C3), and six regulatory PyrI chains organized as three dimers (R2).

It catalyses the reaction carbamoyl phosphate + L-aspartate = N-carbamoyl-L-aspartate + phosphate + H(+). It participates in pyrimidine metabolism; UMP biosynthesis via de novo pathway; (S)-dihydroorotate from bicarbonate: step 2/3. Catalyzes the condensation of carbamoyl phosphate and aspartate to form carbamoyl aspartate and inorganic phosphate, the committed step in the de novo pyrimidine nucleotide biosynthesis pathway. This chain is Aspartate carbamoyltransferase catalytic subunit, found in Cupriavidus pinatubonensis (strain JMP 134 / LMG 1197) (Cupriavidus necator (strain JMP 134)).